The primary structure comprises 231 residues: Putative carboxymethylenebutenolidase (231 aa).

Residues cysteine 118, aspartate 167, and histidine 199 contribute to the active site.

Belongs to the dienelactone hydrolase family.

It catalyses the reaction 2-(5-oxo-2,5-dihydrofuran-2-ylidene)acetate + H2O = 4-oxohex-2-enedioate + H(+). In Aquifex aeolicus (strain VF5), this protein is Putative carboxymethylenebutenolidase.